Reading from the N-terminus, the 90-residue chain is Small ribosomal subunit protein bS6 (90 aa).

An Isoglutamyl lysine isopeptide (Lys-Gln) (interchain with Q-Cter in protein Pup) cross-link involves residue Lys-33.

Belongs to the bacterial ribosomal protein bS6 family.

Binds together with bS18 to 16S ribosomal RNA. In Mycolicibacterium smegmatis (strain ATCC 700084 / mc(2)155) (Mycobacterium smegmatis), this protein is Small ribosomal subunit protein bS6 (rpsF).